Here is a 347-residue protein sequence, read N- to C-terminus: MEGIFAAYVLPALIIALKSVVLLVVLLIVVAYLLYADRKIWAAVQLRRGPNVVGPWGLFQAFADLLKFVFKEPIIPSGANKGVFLLAPFISAVLAMATWAVIPVNEGWAVANINVGILYIFAISSLEVYGVIMGGWASNSKYPFLGALRSAAQMVSYEVSIGFVIVTVLLTVGSLNLTDIVLSQNTGLGTMLGLPASFLDWNWLCLFPMFVVFFISALAETNRPPFDLVEAESELVAGHMIEYSSTPFLLFFLGEYVAITLMCALMTVLFLGGWLPPVDVWFLSWVPGIIWFMLKLCFCFFLFAMVKAFVPRYRYDQLMRLGWKVFLPISLFMVVATATFLKVFGLA.

The next 9 helical transmembrane spans lie at 13-33, 50-70, 82-102, 115-135, 161-181, 198-218, 248-268, 286-306, and 325-345; these read LIIA…VAYL, PNVV…KFVF, GVFL…WAVI, VGIL…IMGG, IGFV…TDIV, FLDW…ISAL, FLLF…LMTV, VPGI…FAMV, and VFLP…KVFG.

Belongs to the complex I subunit 1 family. As to quaternary structure, NDH-1 is composed of 14 different subunits. Subunits NuoA, H, J, K, L, M, N constitute the membrane sector of the complex.

The protein localises to the cell inner membrane. It catalyses the reaction a quinone + NADH + 5 H(+)(in) = a quinol + NAD(+) + 4 H(+)(out). NDH-1 shuttles electrons from NADH, via FMN and iron-sulfur (Fe-S) centers, to quinones in the respiratory chain. The immediate electron acceptor for the enzyme in this species is believed to be ubiquinone. Couples the redox reaction to proton translocation (for every two electrons transferred, four hydrogen ions are translocated across the cytoplasmic membrane), and thus conserves the redox energy in a proton gradient. This subunit may bind ubiquinone. The sequence is that of NADH-quinone oxidoreductase subunit H from Brucella abortus (strain 2308).